The chain runs to 446 residues: tRNA-2-methylthio-N(6)-dimethylallyladenosine synthase (446 aa).

One can recognise an MTTase N-terminal domain in the interval 6-122; that stretch reads RRYHITTFGC…LGDLLQQVFD (117 aa). 6 residues coordinate [4Fe-4S] cluster: cysteine 15, cysteine 51, cysteine 85, cysteine 157, cysteine 161, and cysteine 164. Residues 143 to 380 enclose the Radical SAM core domain; that stretch reads RDSNITAWVN…NHLVATKAAE (238 aa). Residues 383-446 enclose the TRAM domain; sequence QRYLGRIEEI…RPFSLTGVIF (64 aa).

Belongs to the methylthiotransferase family. MiaB subfamily. As to quaternary structure, monomer. It depends on [4Fe-4S] cluster as a cofactor.

It localises to the cytoplasm. The catalysed reaction is N(6)-dimethylallyladenosine(37) in tRNA + (sulfur carrier)-SH + AH2 + 2 S-adenosyl-L-methionine = 2-methylsulfanyl-N(6)-dimethylallyladenosine(37) in tRNA + (sulfur carrier)-H + 5'-deoxyadenosine + L-methionine + A + S-adenosyl-L-homocysteine + 2 H(+). Catalyzes the methylthiolation of N6-(dimethylallyl)adenosine (i(6)A), leading to the formation of 2-methylthio-N6-(dimethylallyl)adenosine (ms(2)i(6)A) at position 37 in tRNAs that read codons beginning with uridine. In Microcystis aeruginosa (strain NIES-843 / IAM M-2473), this protein is tRNA-2-methylthio-N(6)-dimethylallyladenosine synthase.